We begin with the raw amino-acid sequence, 225 residues long: Helicostatins (225 aa).

Positions 1-18 (MLYSSLPVCFLVLGAALC) are cleaved as a signal peptide. The propeptide occupies 19-48 (APERMQNEAEPHDLQPHEAEPHSDHVAPLA). Leu-58, Leu-79, and Leu-90 each carry leucine amide. Positions 94–127 (SVDEDQSNDEQQLTTSDLDQAALAELFDQYDDAE) are excised as a propeptide. Leucine amide is present on Leu-137. A propeptide spanning residues 141 to 149 (FADDETSEE) is cleaved from the precursor. Leu-159, Leu-170, Leu-181, Leu-192, and Leu-206 each carry leucine amide. The segment at 205–225 (GLGKRSGDDVSADDSDNYFDV) is disordered. Positions 210 to 225 (SGDDVSADDSDNYFDV) are excised as a propeptide. Residues 214-225 (VSADDSDNYFDV) are compositionally biased toward acidic residues.

This sequence belongs to the allatostatin family. Highly expressed in the CNS and gut of larvae. Also expressed in the cells of the larval brain and ventral nerve cord and in endocrine cells of the midgut.

The protein resides in the secreted. Functionally, may act as a neurotransmitter or neuromodulator. The sequence is that of Helicostatins from Helicoverpa armigera (Cotton bollworm).